Here is a 472-residue protein sequence, read N- to C-terminus: 3-isopropylmalate dehydratase large subunit (472 aa).

Positions 352, 412, and 415 each coordinate [4Fe-4S] cluster.

Belongs to the aconitase/IPM isomerase family. LeuC type 1 subfamily. As to quaternary structure, heterodimer of LeuC and LeuD. The cofactor is [4Fe-4S] cluster.

It catalyses the reaction (2R,3S)-3-isopropylmalate = (2S)-2-isopropylmalate. It functions in the pathway amino-acid biosynthesis; L-leucine biosynthesis; L-leucine from 3-methyl-2-oxobutanoate: step 2/4. In terms of biological role, catalyzes the isomerization between 2-isopropylmalate and 3-isopropylmalate, via the formation of 2-isopropylmaleate. The sequence is that of 3-isopropylmalate dehydratase large subunit from Roseiflexus castenholzii (strain DSM 13941 / HLO8).